Reading from the N-terminus, the 131-residue chain is 1,4-dihydroxy-2-naphthoyl-CoA hydrolase (131 aa).

The active site involves D7.

Belongs to the 4-hydroxybenzoyl-CoA thioesterase family. DHNA-CoA hydrolase subfamily.

The catalysed reaction is 1,4-dihydroxy-2-naphthoyl-CoA + H2O = 1,4-dihydroxy-2-naphthoate + CoA + H(+). Its pathway is cofactor biosynthesis; phylloquinone biosynthesis. It functions in the pathway quinol/quinone metabolism; 1,4-dihydroxy-2-naphthoate biosynthesis; 1,4-dihydroxy-2-naphthoate from chorismate: step 7/7. In terms of biological role, catalyzes the hydrolysis of 1,4-dihydroxy-2-naphthoyl-CoA (DHNA-CoA) to 1,4-dihydroxy-2-naphthoate (DHNA), a reaction involved in phylloquinone (vitamin K1) biosynthesis. In Synechococcus sp. (strain RCC307), this protein is 1,4-dihydroxy-2-naphthoyl-CoA hydrolase.